The chain runs to 647 residues: Endogenous retrovirus group K member 8 Gag polyprotein (647 aa).

Residue Gly2 is the site of N-myristoyl glycine attachment. The interval 165-264 (GKGPELVGPS…APPSRQGSEL (100 aa)) is disordered. Pro residues predominate over residues 232-247 (GMPPAPQGREPYPQPP). 2 CCHC-type zinc fingers span residues 544-561 (GKCY…NCPV) and 580-597 (DLCP…QCRS). A disordered region spans residues 598–641 (KFDKNGQPLSGNEQRGQPQAPQQTGAFPIQPFVPQGFQDNNPHC). Residues 604–622 (QPLSGNEQRGQPQAPQQTG) show a composition bias toward polar residues.

It belongs to the beta type-B retroviral Gag protein family. HERV class-II K(HML-2) gag subfamily. Post-translationally, myristoylation is essential for retroviral assembly. Alteration of the glycine residue leads to a block in the budding of particles and an accumulation of Gag inside the cell. Specific enzymatic cleavages may yield mature proteins.

It localises to the cell membrane. Its function is as follows. The products of the Gag polyproteins of infectious retroviruses perform highly complex orchestrated tasks during the assembly, budding, maturation, and infection stages of the viral replication cycle. During viral assembly, the proteins form membrane associations and self-associations that ultimately result in budding of an immature virion from the infected cell. Gag precursors also function during viral assembly to selectively bind and package two plus strands of genomic RNA. Endogenous Gag proteins may have kept, lost or modified their original function during evolution. The sequence is that of Endogenous retrovirus group K member 8 Gag polyprotein (ERVK-8) from Homo sapiens (Human).